A 133-amino-acid polypeptide reads, in one-letter code: Holo-[acyl-carrier-protein] synthase (133 aa).

D8 and E57 together coordinate Mg(2+).

This sequence belongs to the P-Pant transferase superfamily. AcpS family. Mg(2+) is required as a cofactor.

Its subcellular location is the cytoplasm. The catalysed reaction is apo-[ACP] + CoA = holo-[ACP] + adenosine 3',5'-bisphosphate + H(+). Functionally, transfers the 4'-phosphopantetheine moiety from coenzyme A to a Ser of acyl-carrier-protein. The sequence is that of Holo-[acyl-carrier-protein] synthase from Bartonella bacilliformis (strain ATCC 35685 / KC583 / Herrer 020/F12,63).